The sequence spans 545 residues: CTP synthase (545 aa).

The interval M1–L265 is amidoligase domain. S13 lines the CTP pocket. UTP is bound at residue S13. ATP contacts are provided by residues S14 to A19 and D71. Mg(2+) contacts are provided by D71 and E139. CTP contacts are provided by residues D146–E148, K186–Q191, and K222. UTP is bound by residues K186–Q191 and K222. The 252-residue stretch at V290 to R541 folds into the Glutamine amidotransferase type-1 domain. L-glutamine is bound at residue G351. C378 functions as the Nucleophile; for glutamine hydrolysis in the catalytic mechanism. Residues L379–Q382, E402, and R469 each bind L-glutamine. Active-site residues include H514 and E516.

It belongs to the CTP synthase family. Homotetramer.

It carries out the reaction UTP + L-glutamine + ATP + H2O = CTP + L-glutamate + ADP + phosphate + 2 H(+). The enzyme catalyses L-glutamine + H2O = L-glutamate + NH4(+). It catalyses the reaction UTP + NH4(+) + ATP = CTP + ADP + phosphate + 2 H(+). Its pathway is pyrimidine metabolism; CTP biosynthesis via de novo pathway; CTP from UDP: step 2/2. Its activity is regulated as follows. Allosterically activated by GTP, when glutamine is the substrate; GTP has no effect on the reaction when ammonia is the substrate. The allosteric effector GTP functions by stabilizing the protein conformation that binds the tetrahedral intermediate(s) formed during glutamine hydrolysis. Inhibited by the product CTP, via allosteric rather than competitive inhibition. Functionally, catalyzes the ATP-dependent amination of UTP to CTP with either L-glutamine or ammonia as the source of nitrogen. Regulates intracellular CTP levels through interactions with the four ribonucleotide triphosphates. This is CTP synthase from Acidithiobacillus ferrooxidans (strain ATCC 23270 / DSM 14882 / CIP 104768 / NCIMB 8455) (Ferrobacillus ferrooxidans (strain ATCC 23270)).